A 108-amino-acid chain; its full sequence is Nucleoid-associated protein Rmet_2128 (108 aa).

Polar residues predominate over residues 86-96; that stretch reads TTQEKMGSMTS. Positions 86–108 are disordered; sequence TTQEKMGSMTSGLPLPPGFKLPF. Residues 99-108 show a composition bias toward pro residues; it reads PLPPGFKLPF.

This sequence belongs to the YbaB/EbfC family. In terms of assembly, homodimer.

It localises to the cytoplasm. The protein localises to the nucleoid. Its function is as follows. Binds to DNA and alters its conformation. May be involved in regulation of gene expression, nucleoid organization and DNA protection. The polypeptide is Nucleoid-associated protein Rmet_2128 (Cupriavidus metallidurans (strain ATCC 43123 / DSM 2839 / NBRC 102507 / CH34) (Ralstonia metallidurans)).